A 458-amino-acid chain; its full sequence is Bifunctional protein GlmU (458 aa).

The pyrophosphorylase stretch occupies residues 1 to 229 (MNKFAIVLAA…FDESLGVNDR (229 aa)). UDP-N-acetyl-alpha-D-glucosamine-binding positions include 8–11 (LAAG), lysine 22, glutamine 72, and 77–78 (GT). Residue aspartate 102 coordinates Mg(2+). The UDP-N-acetyl-alpha-D-glucosamine site is built by glycine 139, glutamate 154, asparagine 169, and asparagine 227. Asparagine 227 is a Mg(2+) binding site. Residues 230 to 250 (VALSQAELTMRKRINHQHMVN) form a linker region. Residues 251–458 (GVTLIDPATT…AKKMPHYRGQ (208 aa)) are N-acetyltransferase. Positions 332 and 350 each coordinate UDP-N-acetyl-alpha-D-glucosamine. The active-site Proton acceptor is histidine 362. Residues tyrosine 365 and asparagine 376 each coordinate UDP-N-acetyl-alpha-D-glucosamine. Residues alanine 379, serine 404, alanine 422, and arginine 439 each contribute to the acetyl-CoA site.

It in the N-terminal section; belongs to the N-acetylglucosamine-1-phosphate uridyltransferase family. The protein in the C-terminal section; belongs to the transferase hexapeptide repeat family. Homotrimer. It depends on Mg(2+) as a cofactor.

Its subcellular location is the cytoplasm. The enzyme catalyses alpha-D-glucosamine 1-phosphate + acetyl-CoA = N-acetyl-alpha-D-glucosamine 1-phosphate + CoA + H(+). It carries out the reaction N-acetyl-alpha-D-glucosamine 1-phosphate + UTP + H(+) = UDP-N-acetyl-alpha-D-glucosamine + diphosphate. Its pathway is nucleotide-sugar biosynthesis; UDP-N-acetyl-alpha-D-glucosamine biosynthesis; N-acetyl-alpha-D-glucosamine 1-phosphate from alpha-D-glucosamine 6-phosphate (route II): step 2/2. It participates in nucleotide-sugar biosynthesis; UDP-N-acetyl-alpha-D-glucosamine biosynthesis; UDP-N-acetyl-alpha-D-glucosamine from N-acetyl-alpha-D-glucosamine 1-phosphate: step 1/1. It functions in the pathway bacterial outer membrane biogenesis; LPS lipid A biosynthesis. Catalyzes the last two sequential reactions in the de novo biosynthetic pathway for UDP-N-acetylglucosamine (UDP-GlcNAc). The C-terminal domain catalyzes the transfer of acetyl group from acetyl coenzyme A to glucosamine-1-phosphate (GlcN-1-P) to produce N-acetylglucosamine-1-phosphate (GlcNAc-1-P), which is converted into UDP-GlcNAc by the transfer of uridine 5-monophosphate (from uridine 5-triphosphate), a reaction catalyzed by the N-terminal domain. The chain is Bifunctional protein GlmU from Lactococcus lactis subsp. lactis (strain IL1403) (Streptococcus lactis).